The following is a 280-amino-acid chain: Ribosomal RNA-processing protein 7 homolog A (280 aa).

In terms of domain architecture, RRM spans 59-159 (RTLFVLNVPP…SGIHKWISDY (101 aa)). Phosphoserine is present on S99.

The protein belongs to the RRP7 family. As to quaternary structure, part of the small subunit (SSU) processome, composed of more than 70 proteins and the RNA chaperone small nucleolar RNA (snoRNA) U3. Interacts with NOL6; required for NOL6 localization to nucleolus. In terms of tissue distribution, expressed in the apical radial glial cells in the developing brain.

It is found in the nucleus. The protein resides in the nucleolus. It localises to the cell projection. The protein localises to the cilium. Its subcellular location is the cytoplasm. It is found in the cytoskeleton. The protein resides in the microtubule organizing center. It localises to the centrosome. Nucleolar protein that is involved in ribosomal RNA (rRNA) processing. Also plays a role in primary cilia resorption, and cell cycle progression in neurogenesis and neocortex development. Part of the small subunit (SSU) processome, first precursor of the small eukaryotic ribosomal subunit. During the assembly of the SSU processome in the nucleolus, many ribosome biogenesis factors, an RNA chaperone and ribosomal proteins associate with the nascent pre-rRNA and work in concert to generate RNA folding, modifications, rearrangements and cleavage as well as targeted degradation of pre-ribosomal RNA by the RNA exosome. In Homo sapiens (Human), this protein is Ribosomal RNA-processing protein 7 homolog A.